The chain runs to 365 residues: Alpha-keto acid-binding periplasmic protein TakP (365 aa).

The segment at residues 1–26 (MDRRSFITKAAVGGAAASALAAPALA) is a signal peptide (tat-type signal). Substrate contacts are provided by residues 99–100 (YY), Gln-156, and Arg-177. Gln-156 is a Na(+) binding site. Positions 214, 215, and 240 each coordinate Na(+).

The protein belongs to the bacterial solute-binding protein 7 family. Homodimer. The complex comprises the extracytoplasmic solute receptor protein TakP, and the two transmembrane proteins TakQ and TakM. Post-translationally, predicted to be exported by the Tat system. The position of the signal peptide cleavage has not been experimentally proven.

It localises to the periplasm. In terms of biological role, part of the tripartite ATP-independent periplasmic (TRAP) transport system TakPQM involved in the uptake of alpha-keto acids. This protein specifically binds alpha-keto acids including pyruvate, oxobutyrate, oxovalerate and 4-methyl-2-oxovalerate. Ligand-binding affinity increases with the increasing chain length of the aliphatic backbone of the ligand. Is not able to bind alpha-ketoglutarate. This is Alpha-keto acid-binding periplasmic protein TakP from Cereibacter sphaeroides (strain ATCC 17023 / DSM 158 / JCM 6121 / CCUG 31486 / LMG 2827 / NBRC 12203 / NCIMB 8253 / ATH 2.4.1.) (Rhodobacter sphaeroides).